Reading from the N-terminus, the 439-residue chain is Xaa-Pro dipeptidase (439 aa).

5 residues coordinate Mn(2+): Asp244, Asp255, His335, Glu380, and Glu419.

It belongs to the peptidase M24B family. Bacterial-type prolidase subfamily. Mn(2+) serves as cofactor.

The enzyme catalyses Xaa-L-Pro dipeptide + H2O = an L-alpha-amino acid + L-proline. Functionally, splits dipeptides with a prolyl residue in the C-terminal position. The sequence is that of Xaa-Pro dipeptidase from Shewanella sp. (strain ANA-3).